The primary structure comprises 140 residues: Encapsulated ferritin-like protein (140 aa).

Glu-31 provides a ligand contact to Ca(2+). Fe cation is bound at residue Glu-32. Residue Glu-34 coordinates Ca(2+). Fe cation contacts are provided by Glu-62 and His-65. The tract at residues 100-140 (ADTAGEGSGGDAAKGATAQGDGSLGIGSLKGEAALARPPRL) is disordered. The interval 100-140 (ADTAGEGSGGDAAKGATAQGDGSLGIGSLKGEAALARPPRL) is targeting peptide.

This sequence belongs to the ferritin-like superfamily. EncFtn family. As to quaternary structure, monomers form antiparallel dimers which assemble in a decameric ring 7 nm in diameter and 4.5 nm thick with a central channel (construct without targeting peptide). Growth in Fe(2+)-rich medium induces oligomerization, the monomer does not bind metals. The target peptide probably extends away from the ring, to allow binding to the interior of the encapsulin nanocompartment shell. Fe(2+) is required as a cofactor. Requires Ca(2+) as cofactor.

It localises to the encapsulin nanocompartment. The catalysed reaction is 4 Fe(2+) + O2 + 4 H(+) = 4 Fe(3+) + 2 H2O. Ferroxidase activity inhibited by Zn(2+). Mutants at Glu-31, Glu-34 and Trp-38 are also inhibited by Zn(2+). Functionally, cargo protein of a type 1 encapsulin nanocompartment. A ferritin-like ferroxidase that mineralizes iron inside the encapsulin nanocompartment. Converts Fe(2+) to Fe(3+) that is released to the exterior of the decameric complex for deposition in the encapsulin nanocompartment. In solution the decamer binds 10-15 iron cations; in the encapsulin nanocompartment the decamer can bind up to 48 ions, perhaps via its internal channel and on its exterior. The empty encapsulin nanocompartment sequesters about 2200 Fe ions while the cargo-loaded nanocompartment can maximally sequester about 4150 Fe ions. EncFtn retains ferroxidase activity when encapsulated. Flux in the active site di-iron metal center is thought to be controlled by the 'entry site' of the protein, which both attracts metal and controls the rate of iron oxidation. Encapsulation in the nanocompartment does not alter either function of this protein. This chain is Encapsulated ferritin-like protein, found in Rhodospirillum rubrum (strain ATCC 11170 / ATH 1.1.1 / DSM 467 / LMG 4362 / NCIMB 8255 / S1).